The following is a 216-amino-acid chain: Probable succinyl-CoA:3-ketoacid coenzyme A transferase subunit B (216 aa).

Glu-47 is an active-site residue.

This sequence belongs to the 3-oxoacid CoA-transferase subunit B family. As to quaternary structure, heterodimer of a subunit A and a subunit B.

It catalyses the reaction a 3-oxo acid + succinyl-CoA = a 3-oxoacyl-CoA + succinate. This Bacillus subtilis (strain 168) protein is Probable succinyl-CoA:3-ketoacid coenzyme A transferase subunit B (scoB).